A 209-amino-acid chain; its full sequence is Virulence factors putative positive transcription regulator BvgA (209 aa).

The 116-residue stretch at 4 to 119 (KVLIIDDHPV…EVINAAKAVM (116 aa)) folds into the Response regulatory domain. Position 54 is a 4-aspartylphosphate (D54). The region spanning 142–207 (DSTLISVLSN…ELIDLAKRNN (66 aa)) is the HTH luxR-type domain. The H-T-H motif DNA-binding region spans 166–185 (NKDIADSMFLSNKTVSTYKT).

Homodimer. Phosphorylated by BvgS.

Member of the two-component regulatory system BvgS/BvgA. Activates the transcription of virulence genes. The protein is Virulence factors putative positive transcription regulator BvgA (bvgA) of Bordetella bronchiseptica (strain ATCC BAA-588 / NCTC 13252 / RB50) (Alcaligenes bronchisepticus).